Here is a 155-residue protein sequence, read N- to C-terminus: uncharacterized protein (155 aa).

This is an uncharacterized protein from Agrobacterium vitis (Rhizobium vitis).